Consider the following 373-residue polypeptide: DNA dC-&gt;dU-editing enzyme APOBEC-3F (373 aa).

CMP/dCMP-type deaminase domains follow at residues 29–137 and 174–321; these read RRNT…LCRL and DDNY…LRSL. Residue K52 forms a (Microbial infection) Glycyl lysine isopeptide (Lys-Gly) (interchain with G-Cter in ubiquitin) linkage. Positions 65, 96, and 99 each coordinate Zn(2+). A (Microbial infection) Glycyl lysine isopeptide (Lys-Gly) (interchain with G-Cter in ubiquitin) cross-link involves residue K234. Position 249 (H249) interacts with Zn(2+). E251 serves as the catalytic Proton donor. C280 and C283 together coordinate Zn(2+). Cysteines 280 and 283 form a disulfide. (Microbial infection) Glycyl lysine isopeptide (Lys-Gly) (interchain with G-Cter in ubiquitin) cross-links involve residues K334, K352, K355, and K358.

The protein belongs to the cytidine and deoxycytidylate deaminase family. Homodimer. Interacts with APOBEC3G in an RNA-dependent manner. Interacts with AGO1, AGO2 and AGO3. In terms of assembly, (Microbial infection) Interacts with HIV-1 Vif, leading to its ubiquitination and degradation by the proteasome. In the absence of Vif protein, specifically packaged into HIV-1 virions. Requires Zn(2+) as cofactor. (Microbial infection) Following infection by HIV-1, ubiquitinated by a cullin-5-RING E3 ubiquitin-protein ligase complex (ECS complex) hijacked by the HIV-1 Vif protein, leading to its degradation. In terms of tissue distribution, widely expressed. Highly expressed in ovary.

It localises to the cytoplasm. Its subcellular location is the P-body. The enzyme catalyses a 2'-deoxycytidine in single-stranded DNA + H2O + H(+) = a 2'-deoxyuridine in single-stranded DNA + NH4(+). Its activity is regulated as follows. (Microbial infection) Antiviral activity is neutralized by the HIV-1 virion infectivity factor (Vif), that prevents its incorporation into progeny virions by both inhibiting its translation and/or by inducing its ubiquitination and subsequent degradation by the 26S proteasome. DNA deaminase (cytidine deaminase) which acts as an inhibitor of retrovirus replication and retrotransposon mobility via deaminase-dependent and -independent mechanisms. Exhibits antiviral activity against viruse such as HIV-1 or HIV-2. After the penetration of retroviral nucleocapsids into target cells of infection and the initiation of reverse transcription, it can induce the conversion of cytosine to uracil in the minus-sense single-strand viral DNA, leading to G-to-A hypermutations in the subsequent plus-strand viral DNA. The resultant detrimental levels of mutations in the proviral genome, along with a deamination-independent mechanism that works prior to the proviral integration, together exert efficient antiretroviral effects in infected target cells. Selectively targets single-stranded DNA and does not deaminate double-stranded DNA or single- or double-stranded RNA. Exhibits antiviral activity also against hepatitis B virus (HBV), equine infectious anemia virus (EIAV), xenotropic MuLV-related virus (XMRV) and simian foamy virus (SFV) and may inhibit the mobility of LTR and non-LTR retrotransposons. May also play a role in the epigenetic regulation of gene expression through the process of active DNA demethylation. In Homo sapiens (Human), this protein is DNA dC-&gt;dU-editing enzyme APOBEC-3F.